A 370-amino-acid polypeptide reads, in one-letter code: 3-dehydroquinate synthase (370 aa).

NAD(+)-binding positions include Gly108–Asp112, Thr132–Thr133, Lys145, and Lys154. Glu187, His249, and His267 together coordinate Zn(2+).

The protein belongs to the sugar phosphate cyclases superfamily. Dehydroquinate synthase family. It depends on Co(2+) as a cofactor. Zn(2+) serves as cofactor. NAD(+) is required as a cofactor.

Its subcellular location is the cytoplasm. It catalyses the reaction 7-phospho-2-dehydro-3-deoxy-D-arabino-heptonate = 3-dehydroquinate + phosphate. It functions in the pathway metabolic intermediate biosynthesis; chorismate biosynthesis; chorismate from D-erythrose 4-phosphate and phosphoenolpyruvate: step 2/7. Functionally, catalyzes the conversion of 3-deoxy-D-arabino-heptulosonate 7-phosphate (DAHP) to dehydroquinate (DHQ). This Cereibacter sphaeroides (strain KD131 / KCTC 12085) (Rhodobacter sphaeroides) protein is 3-dehydroquinate synthase.